A 256-amino-acid chain; its full sequence is Peroxisomal membrane protein PMP30A (256 aa).

Belongs to the peroxin-11 family.

The protein resides in the peroxisome membrane. Involved in peroxisomal proliferation. Could participate in peroxisomal elongation or fission. May be involved in parceling of peroxisomes into regular quanta. This Candida boidinii (Yeast) protein is Peroxisomal membrane protein PMP30A (PEX11A).